We begin with the raw amino-acid sequence, 324 residues long: Ribose-phosphate pyrophosphokinase (324 aa).

ATP contacts are provided by residues 45-47 and 104-105; these read NGE and RQ. 2 residues coordinate Mg(2+): H138 and D178. K201 is an active-site residue. D-ribose 5-phosphate contacts are provided by residues R203, D229, and 233–237; that span reads DTGGT.

It belongs to the ribose-phosphate pyrophosphokinase family. Class I subfamily. As to quaternary structure, homohexamer. The cofactor is Mg(2+).

It localises to the cytoplasm. It catalyses the reaction D-ribose 5-phosphate + ATP = 5-phospho-alpha-D-ribose 1-diphosphate + AMP + H(+). It functions in the pathway metabolic intermediate biosynthesis; 5-phospho-alpha-D-ribose 1-diphosphate biosynthesis; 5-phospho-alpha-D-ribose 1-diphosphate from D-ribose 5-phosphate (route I): step 1/1. In terms of biological role, involved in the biosynthesis of the central metabolite phospho-alpha-D-ribosyl-1-pyrophosphate (PRPP) via the transfer of pyrophosphoryl group from ATP to 1-hydroxyl of ribose-5-phosphate (Rib-5-P). The chain is Ribose-phosphate pyrophosphokinase from Streptomyces avermitilis (strain ATCC 31267 / DSM 46492 / JCM 5070 / NBRC 14893 / NCIMB 12804 / NRRL 8165 / MA-4680).